The sequence spans 198 residues: Cytochrome c oxidase subunit 2 (198 aa).

The helical transmembrane segment at 1–13 (AICSLVLYLLTLM) threads the bilayer. At 14–26 (LMEKLSSNTVDAQ) the chain is on the mitochondrial matrix side. Residues 27 to 54 (EVELIWTILPAIVLILLALPSLQILYMM) traverse the membrane as a helical segment. Topologically, residues 55–198 (DEIDEPDLTL…WSSLLSTSSL (144 aa)) are mitochondrial intermembrane. Cu cation-binding residues include His-128, Cys-163, Glu-165, Cys-167, His-171, and Met-174. Glu-165 contributes to the Mg(2+) binding site.

This sequence belongs to the cytochrome c oxidase subunit 2 family. In terms of assembly, component of the cytochrome c oxidase (complex IV, CIV), a multisubunit enzyme composed of 14 subunits. The complex is composed of a catalytic core of 3 subunits MT-CO1, MT-CO2 and MT-CO3, encoded in the mitochondrial DNA, and 11 supernumerary subunits COX4I, COX5A, COX5B, COX6A, COX6B, COX6C, COX7A, COX7B, COX7C, COX8 and NDUFA4, which are encoded in the nuclear genome. The complex exists as a monomer or a dimer and forms supercomplexes (SCs) in the inner mitochondrial membrane with NADH-ubiquinone oxidoreductase (complex I, CI) and ubiquinol-cytochrome c oxidoreductase (cytochrome b-c1 complex, complex III, CIII), resulting in different assemblies (supercomplex SCI(1)III(2)IV(1) and megacomplex MCI(2)III(2)IV(2)). Found in a complex with TMEM177, COA6, COX18, COX20, SCO1 and SCO2. Interacts with TMEM177 in a COX20-dependent manner. Interacts with COX20. Interacts with COX16. Requires Cu cation as cofactor.

It is found in the mitochondrion inner membrane. It carries out the reaction 4 Fe(II)-[cytochrome c] + O2 + 8 H(+)(in) = 4 Fe(III)-[cytochrome c] + 2 H2O + 4 H(+)(out). Its function is as follows. Component of the cytochrome c oxidase, the last enzyme in the mitochondrial electron transport chain which drives oxidative phosphorylation. The respiratory chain contains 3 multisubunit complexes succinate dehydrogenase (complex II, CII), ubiquinol-cytochrome c oxidoreductase (cytochrome b-c1 complex, complex III, CIII) and cytochrome c oxidase (complex IV, CIV), that cooperate to transfer electrons derived from NADH and succinate to molecular oxygen, creating an electrochemical gradient over the inner membrane that drives transmembrane transport and the ATP synthase. Cytochrome c oxidase is the component of the respiratory chain that catalyzes the reduction of oxygen to water. Electrons originating from reduced cytochrome c in the intermembrane space (IMS) are transferred via the dinuclear copper A center (CU(A)) of subunit 2 and heme A of subunit 1 to the active site in subunit 1, a binuclear center (BNC) formed by heme A3 and copper B (CU(B)). The BNC reduces molecular oxygen to 2 water molecules using 4 electrons from cytochrome c in the IMS and 4 protons from the mitochondrial matrix. The polypeptide is Cytochrome c oxidase subunit 2 (MT-CO2) (Tinamus major (Great tinamou)).